The following is a 336-amino-acid chain: Fructose-1,6-bisphosphatase class 1 (336 aa).

4 residues coordinate Mg(2+): Glu-92, Asp-115, Leu-117, and Asp-118. Residues 118 to 121 (DGSS), Asn-211, Tyr-244, 262 to 264 (YLY), and Lys-274 contribute to the substrate site. Glu-280 lines the Mg(2+) pocket.

The protein belongs to the FBPase class 1 family. As to quaternary structure, homotetramer. The cofactor is Mg(2+).

Its subcellular location is the cytoplasm. It catalyses the reaction beta-D-fructose 1,6-bisphosphate + H2O = beta-D-fructose 6-phosphate + phosphate. It participates in carbohydrate biosynthesis; gluconeogenesis. The sequence is that of Fructose-1,6-bisphosphatase class 1 from Aliivibrio fischeri (strain ATCC 700601 / ES114) (Vibrio fischeri).